A 67-amino-acid polypeptide reads, in one-letter code: Conotoxin VnMMSK-03 (67 aa).

The signal sequence occupies residues 1–20 (MMSKLGVVLTICLLPFPLTA). The propeptide occupies 21 to 50 (LPMDGDQPADLPALRTQDFEPERSPWFDPV). Cystine bridges form between cysteine 53–cysteine 65, cysteine 54–cysteine 61, and cysteine 58–cysteine 64. Residue proline 63 is modified to 4-hydroxyproline.

The protein belongs to the conotoxin M superfamily. As to expression, expressed by the venom duct.

It localises to the secreted. The chain is Conotoxin VnMMSK-03 from Conus ventricosus (Mediterranean cone).